The following is a 429-amino-acid chain: Glutamate-1-semialdehyde 2,1-aminomutase 1 (429 aa).

An N6-(pyridoxal phosphate)lysine modification is found at K268.

It belongs to the class-III pyridoxal-phosphate-dependent aminotransferase family. HemL subfamily. Homodimer. Pyridoxal 5'-phosphate is required as a cofactor.

It localises to the cytoplasm. It catalyses the reaction (S)-4-amino-5-oxopentanoate = 5-aminolevulinate. It functions in the pathway porphyrin-containing compound metabolism; protoporphyrin-IX biosynthesis; 5-aminolevulinate from L-glutamyl-tRNA(Glu): step 2/2. This is Glutamate-1-semialdehyde 2,1-aminomutase 1 from Staphylococcus haemolyticus (strain JCSC1435).